A 214-amino-acid chain; its full sequence is Holliday junction branch migration complex subunit RuvA (214 aa).

Residues 1–68 (MIGFLQGKVL…QPKPVLIGFD (68 aa)) form a domain I region. The tract at residues 69 to 146 (SAEEKDFFQL…RFLLAADEAG (78 aa)) is domain II. Positions 147–160 (AGDGVSKTGTPSLP) are flexible linker. The domain III stretch occupies residues 161–214 (IQKAIDQVVDVLVQQLGHTPSAAKMMVAQALDRDPEIMTPEALFDEVYKGDVDA).

It belongs to the RuvA family. In terms of assembly, homotetramer. Forms an RuvA(8)-RuvB(12)-Holliday junction (HJ) complex. HJ DNA is sandwiched between 2 RuvA tetramers; dsDNA enters through RuvA and exits via RuvB. An RuvB hexamer assembles on each DNA strand where it exits the tetramer. Each RuvB hexamer is contacted by two RuvA subunits (via domain III) on 2 adjacent RuvB subunits; this complex drives branch migration. In the full resolvosome a probable DNA-RuvA(4)-RuvB(12)-RuvC(2) complex forms which resolves the HJ.

It localises to the cytoplasm. Its function is as follows. The RuvA-RuvB-RuvC complex processes Holliday junction (HJ) DNA during genetic recombination and DNA repair, while the RuvA-RuvB complex plays an important role in the rescue of blocked DNA replication forks via replication fork reversal (RFR). RuvA specifically binds to HJ cruciform DNA, conferring on it an open structure. The RuvB hexamer acts as an ATP-dependent pump, pulling dsDNA into and through the RuvAB complex. HJ branch migration allows RuvC to scan DNA until it finds its consensus sequence, where it cleaves and resolves the cruciform DNA. The chain is Holliday junction branch migration complex subunit RuvA from Desulforapulum autotrophicum (strain ATCC 43914 / DSM 3382 / VKM B-1955 / HRM2) (Desulfobacterium autotrophicum).